We begin with the raw amino-acid sequence, 1200 residues long: DNA polymerase subunit gamma-1 (1200 aa).

2 disordered regions span residues 471-515 (QKKT…RPSM) and 667-688 (MDLS…SSEH). Over residues 472–481 (KKTKISKKQK) the composition is skewed to basic residues. A compositionally biased stretch (basic and acidic residues) spans 494 to 512 (LVEDHNEDPGPPTEKEESR).

The protein belongs to the DNA polymerase type-A family. Heterotrimer composed of a catalytic subunit and a homodimer of accessory subunits. The cofactor is Mg(2+).

The protein resides in the mitochondrion. It is found in the mitochondrion matrix. It localises to the mitochondrion nucleoid. The catalysed reaction is DNA(n) + a 2'-deoxyribonucleoside 5'-triphosphate = DNA(n+1) + diphosphate. Its function is as follows. Involved in the replication of mitochondrial DNA. Associates with mitochondrial DNA. This Xenopus laevis (African clawed frog) protein is DNA polymerase subunit gamma-1 (polg).